The primary structure comprises 505 residues: MQFSGRIRKKLRLAGDQRNASYPHSLQFYLQPPTENISLTEFENLAFDRVKLLKAIENLGVSYVKGTEQYQSKLEAEIRKLKFSYRENLEDEYEPRRRDHISHFILRLAYCQSEDLRRWFIQQEMDLLRFRFSILPKDKVQSFLKDSHLHFEAISDEEKTLREQDIMASSPSLSGIKLESESVYKVPFADALDLFRGRKVYLEDGFAYVPLKDIVAIILNEFRATLSKALALTARSLPAVQSDERLQPLLNHLSHSYTGQDYSTQKNTGKISLDQIDSLSTKSFPPCMRQLHKALRENHHLRHGGRMQYGLFLKGIGLTLEQALQFWKQEFIRGKMDPDKFDKGYSYNIRHSFGKEGKRTDYTPFSCMKIILTNPPGQGDYHGCPFRHSDAELLKQKMQSYKIPASGISQILDLVKGNHYQVACQKYFEMTHNVDDCGFSLNHPNQFFFESQRILTGGKDIKKEISQPETPQHKPSTQKTRDAASALASLDSSLEMDLEGLEEYF.

The tract at residues 253 to 270 (LSHSYTGQDYSTQKNTGK) is interdomain linker. Residues 266–503 (KNTGKISLDQ…LEMDLEGLEE (238 aa)) are interacts with PRIM1. [4Fe-4S] cluster is bound by residues Cys-287, Cys-367, Cys-384, and Cys-424. Positions 300–442 (HLRHGGRMQY…NVDDCGFSLN (143 aa)) are RNA:DNA duplex binding. The interval 463–486 (KEISQPETPQHKPSTQKTRDAASA) is disordered. A compositionally biased stretch (polar residues) spans 467-478 (QPETPQHKPSTQ). Thr-470 bears the Phosphothreonine mark.

Belongs to the eukaryotic-type primase large subunit family. Heterodimer of a catalytic subunit PRIM1 and a regulatory subunit PRIM2, also known as the DNA primase complex. Interacts via (C-terminus) with PRIM1. Component of the alpha DNA polymerase complex (also known as the alpha DNA polymerase-primase complex) consisting of four subunits: the catalytic subunit POLA1, the regulatory subunit POLA2, and the primase complex subunits PRIM1 and PRIM2 respectively. Within the complex, POLA1 directly interacts with PRIM2. Requires [4Fe-4S] cluster as cofactor.

Its function is as follows. Regulatory subunit of the DNA primase complex and component of the DNA polymerase alpha complex (also known as the alpha DNA polymerase-primase complex) which play an essential role in the initiation of DNA synthesis. During the S phase of the cell cycle, the DNA polymerase alpha complex (composed of a catalytic subunit POLA1, an accessory subunit POLA2 and two primase subunits, the catalytic subunit PRIM1 and the regulatory subunit PRIM2) is recruited to DNA at the replicative forks via direct interactions with MCM10 and WDHD1. The primase subunit of the polymerase alpha complex initiates DNA synthesis by oligomerising short RNA primers on both leading and lagging strands. These primers are initially extended by the polymerase alpha catalytic subunit and subsequently transferred to polymerase delta and polymerase epsilon for processive synthesis on the lagging and leading strand, respectively. In the primase complex, both subunits are necessary for the initial di-nucleotide formation, but the extension of the primer depends only on the catalytic subunit. Binds RNA:DNA duplex and coordinates the catalytic activities of PRIM1 and POLA2 during primase-to-polymerase switch. This is DNA primase large subunit (Prim2) from Mus musculus (Mouse).